A 345-amino-acid chain; its full sequence is Fructose-bisphosphate aldolase, plasmid (345 aa).

Ser-50 is a D-glyceraldehyde 3-phosphate binding site. Catalysis depends on Asp-83, which acts as the Proton donor. The Zn(2+) site is built by His-84, Asp-105, Glu-142, and His-198. Gly-199 is a dihydroxyacetone phosphate binding site. His-232 is a binding site for Zn(2+). Dihydroxyacetone phosphate is bound by residues 233–235 (GSS) and 275–278 (NIDT).

Belongs to the class II fructose-bisphosphate aldolase family. Homodimer. Zn(2+) is required as a cofactor.

It carries out the reaction beta-D-fructose 1,6-bisphosphate = D-glyceraldehyde 3-phosphate + dihydroxyacetone phosphate. It functions in the pathway carbohydrate biosynthesis; Calvin cycle. Its pathway is carbohydrate degradation; glycolysis; D-glyceraldehyde 3-phosphate and glycerone phosphate from D-glucose: step 4/4. In terms of biological role, catalyzes the aldol condensation of dihydroxyacetone phosphate (DHAP or glycerone-phosphate) with glyceraldehyde 3-phosphate (G3P) to form fructose 1,6-bisphosphate (FBP) in gluconeogenesis and the reverse reaction in glycolysis. This Cupriavidus necator (strain ATCC 17699 / DSM 428 / KCTC 22496 / NCIMB 10442 / H16 / Stanier 337) (Ralstonia eutropha) protein is Fructose-bisphosphate aldolase, plasmid (cbbAP).